The sequence spans 169 residues: uncharacterized protein (169 aa).

This is an uncharacterized protein from Mycoplasma genitalium (strain ATCC 33530 / DSM 19775 / NCTC 10195 / G37) (Mycoplasmoides genitalium).